Reading from the N-terminus, the 487-residue chain is PPE family protein PPE10 (487 aa).

The segment covering 398 to 424 (APVGGLDSGNPNPGSGSAAAGSGANPG) has biased composition (low complexity). A disordered region spans residues 398 to 487 (APVGGLDSGN…PRIGQPVGSE (90 aa)). Residues 428–446 (PGTSYPSFVNSGSNDSGLR) are compositionally biased toward polar residues.

Belongs to the mycobacterial PPE family.

It localises to the secreted. Functionally, plays a major role in the integrity and stability of the capsule. This Mycobacterium tuberculosis (strain CDC 1551 / Oshkosh) protein is PPE family protein PPE10 (PPE10).